Consider the following 245-residue polypeptide: tRNA1(Val) (adenine(37)-N6)-methyltransferase (245 aa).

This sequence belongs to the methyltransferase superfamily. tRNA (adenine-N(6)-)-methyltransferase family.

Its subcellular location is the cytoplasm. The catalysed reaction is adenosine(37) in tRNA1(Val) + S-adenosyl-L-methionine = N(6)-methyladenosine(37) in tRNA1(Val) + S-adenosyl-L-homocysteine + H(+). Specifically methylates the adenine in position 37 of tRNA(1)(Val) (anticodon cmo5UAC). This is tRNA1(Val) (adenine(37)-N6)-methyltransferase (yfiC) from Escherichia coli (strain K12).